The sequence spans 339 residues: 4-hydroxythreonine-4-phosphate dehydrogenase (339 aa).

Residues H141 and T142 each coordinate substrate. The a divalent metal cation site is built by H171, H215, and H270. Substrate is bound by residues K278, N287, and R296.

Belongs to the PdxA family. In terms of assembly, homodimer. Requires Zn(2+) as cofactor. The cofactor is Mg(2+). It depends on Co(2+) as a cofactor.

The protein localises to the cytoplasm. The catalysed reaction is 4-(phosphooxy)-L-threonine + NAD(+) = 3-amino-2-oxopropyl phosphate + CO2 + NADH. The protein operates within cofactor biosynthesis; pyridoxine 5'-phosphate biosynthesis; pyridoxine 5'-phosphate from D-erythrose 4-phosphate: step 4/5. Functionally, catalyzes the NAD(P)-dependent oxidation of 4-(phosphooxy)-L-threonine (HTP) into 2-amino-3-oxo-4-(phosphooxy)butyric acid which spontaneously decarboxylates to form 3-amino-2-oxopropyl phosphate (AHAP). The sequence is that of 4-hydroxythreonine-4-phosphate dehydrogenase from Geobacter metallireducens (strain ATCC 53774 / DSM 7210 / GS-15).